Here is a 117-residue protein sequence, read N- to C-terminus: Large-conductance mechanosensitive channel (117 aa).

Transmembrane regions (helical) follow at residues 7-27 (EFAL…GAAF), 30-50 (IVTA…FGTV), and 64-84 (GMFV…FIFV).

It belongs to the MscL family. Homopentamer.

It localises to the cell membrane. Channel that opens in response to stretch forces in the membrane lipid bilayer. May participate in the regulation of osmotic pressure changes within the cell. The polypeptide is Large-conductance mechanosensitive channel (Staphylococcus saprophyticus subsp. saprophyticus (strain ATCC 15305 / DSM 20229 / NCIMB 8711 / NCTC 7292 / S-41)).